A 95-amino-acid polypeptide reads, in one-letter code: uncharacterized protein (95 aa).

This is an uncharacterized protein from Escherichia coli (strain K12).